Reading from the N-terminus, the 114-residue chain is Fumarate reductase subunit D (114 aa).

3 helical membrane-spanning segments follow: residues 24-44 (ISALAFPVLILILGILLPLGI), 49-69 (GIIAFAHHWFGKLVILVLTIF), and 94-114 (LIFYGLAVLYTVVAIWGVASI).

It belongs to the FrdD family. Part of an enzyme complex containing four subunits: a flavoprotein (FrdA), an iron-sulfur protein (FrdB), and two hydrophobic anchor proteins (FrdC and FrdD).

It is found in the cell inner membrane. Its function is as follows. Anchors the catalytic components of the fumarate reductase complex to the cell membrane, binds quinones. The polypeptide is Fumarate reductase subunit D (Actinobacillus succinogenes (strain ATCC 55618 / DSM 22257 / CCUG 43843 / 130Z)).